The sequence spans 212 residues: Fibrillarin-like rRNA/tRNA 2'-O-methyltransferase (212 aa).

Residues 76–77 (TT), 94–95 (EL), 119–120 (DA), and 139–142 (DIAQ) each bind S-adenosyl-L-methionine.

The protein belongs to the methyltransferase superfamily. Fibrillarin family. As to quaternary structure, interacts with nop5. Component of box C/D small ribonucleoprotein (sRNP) particles that contain rpl7ae, FlpA and nop5, plus a guide RNA.

Involved in pre-rRNA and tRNA processing. Utilizes the methyl donor S-adenosyl-L-methionine to catalyze the site-specific 2'-hydroxyl methylation of ribose moieties in rRNA and tRNA. Site specificity is provided by a guide RNA that base pairs with the substrate. Methylation occurs at a characteristic distance from the sequence involved in base pairing with the guide RNA. The sequence is that of Fibrillarin-like rRNA/tRNA 2'-O-methyltransferase from Picrophilus torridus (strain ATCC 700027 / DSM 9790 / JCM 10055 / NBRC 100828 / KAW 2/3).